The chain runs to 375 residues: Secondary metabolism regulator laeA (375 aa).

The segment covering 15–26 (ASPNRNNYSYQG) has biased composition (polar residues). Disordered regions lie at residues 15 to 37 (ASPN…RSRQ) and 50 to 75 (QEPP…TSHY).

It belongs to the methyltransferase superfamily. LaeA methyltransferase family. In terms of assembly, component of the heterotrimeric velvet complex composed of laeA, veA and velB; VeA acting as a bridging protein between laeA and velB.

The protein localises to the nucleus. It catalyses the reaction L-methionyl-[protein] + S-adenosyl-L-methionine = S-methyl-L-methionyl-[protein] + S-adenosyl-L-homocysteine. Its function is as follows. Methyltransferase that performs automethylation. No other methyl-accepting substrate has been identified yet. Component of the velvet transcription factor complex that acts as a global regulator for secondary metabolite gene expression. Controls the expression of the citric acid, demethylkotanin, orlandin, asperrubrol, tensidol B, atromentin and JBIR8 gene clusters. Also represses the expression of genes related to the production of BMS-192548 and aspernigrin A. The protein is Secondary metabolism regulator laeA of Aspergillus niger (strain ATCC 1015 / CBS 113.46 / FGSC A1144 / LSHB Ac4 / NCTC 3858a / NRRL 328 / USDA 3528.7).